The primary structure comprises 306 residues: Ribosomal protein L11 methyltransferase (306 aa).

S-adenosyl-L-methionine-binding residues include Thr-154, Gly-179, Asp-201, and Asn-242.

The protein belongs to the methyltransferase superfamily. PrmA family.

Its subcellular location is the cytoplasm. It carries out the reaction L-lysyl-[protein] + 3 S-adenosyl-L-methionine = N(6),N(6),N(6)-trimethyl-L-lysyl-[protein] + 3 S-adenosyl-L-homocysteine + 3 H(+). Methylates ribosomal protein L11. This chain is Ribosomal protein L11 methyltransferase, found in Xanthomonas euvesicatoria pv. vesicatoria (strain 85-10) (Xanthomonas campestris pv. vesicatoria).